A 285-amino-acid polypeptide reads, in one-letter code: 2,3,4,5-tetrahydropyridine-2,6-dicarboxylate N-succinyltransferase (285 aa).

Positions 111 and 148 each coordinate substrate.

This sequence belongs to the transferase hexapeptide repeat family. As to quaternary structure, homotrimer.

It localises to the cytoplasm. It catalyses the reaction (S)-2,3,4,5-tetrahydrodipicolinate + succinyl-CoA + H2O = (S)-2-succinylamino-6-oxoheptanedioate + CoA. Its pathway is amino-acid biosynthesis; L-lysine biosynthesis via DAP pathway; LL-2,6-diaminopimelate from (S)-tetrahydrodipicolinate (succinylase route): step 1/3. The chain is 2,3,4,5-tetrahydropyridine-2,6-dicarboxylate N-succinyltransferase from Sinorhizobium medicae (strain WSM419) (Ensifer medicae).